A 275-amino-acid chain; its full sequence is Uronate dehydrogenase (275 aa).

NAD(+)-binding positions include 22-23 (GL), 42-44 (DIA), 60-61 (DL), and 80-84 (FGGVS). Substrate is bound by residues S84 and 120–122 (SNH). Y145 functions as the Proton acceptor in the catalytic mechanism. K149 contacts NAD(+). S174 is a substrate binding site. S175 lines the NAD(+) pocket. R183 is a substrate binding site.

It belongs to the NAD(P)-dependent epimerase/dehydratase family. Homohexamer.

It carries out the reaction beta-D-galacturonate + NAD(+) = D-galactaro-1,5-lactone + NADH + H(+). The enzyme catalyses beta-D-glucuronate + NAD(+) = D-glucaro-1,5-lactone + NADH + H(+). The protein operates within carbohydrate acid metabolism; D-galacturonate degradation via prokaryotic oxidative pathway. Functionally, catalyzes the oxidation of beta-D-galacturonate and beta-D-glucuronate to galactarate and D-glucarate, respectively. Cannot use NADP(+) instead of NAD(+) as cosubstrate. The chain is Uronate dehydrogenase (udh) from Pseudomonas syringae pv. tomato (strain ATCC BAA-871 / DC3000).